We begin with the raw amino-acid sequence, 572 residues long: Nucleolin 1 (572 aa).

Disordered regions lie at residues 1–312 (MGKA…ESAT) and 488–572 (DEAK…FGDE). A compositionally biased stretch (low complexity) spans 7–21 (KSVAVAVAPAAVPAK). Over residues 27–38 (KREAEDEIEKAV) the composition is skewed to basic and acidic residues. Low complexity-rich tracts occupy residues 45–58 (AAAA…PAPK) and 72–81 (KAASSSSGSS). Composition is skewed to acidic residues over residues 82–91 (SEEDSSESEE), 109–122 (SSDE…DDED), 144–156 (SESD…DEDE), 177–191 (DSSE…SDED), 208–222 (STDG…EDED), 235–247 (SDEE…ESSD), and 261–276 (ESSE…EEDE). Positions 300 to 311 (PASNQSQGTESA) are enriched in polar residues. RRM domains are found at residues 311–387 (ATLF…LAHE) and 411–492 (QSIF…EAKP). Basic and acidic residues-rich tracts occupy residues 488 to 520 (DEAK…DRFG) and 528 to 545 (GGRD…DGGR). Polar residues predominate over residues 553–566 (QSRQSAGTASTGKK).

It localises to the nucleus. The protein localises to the nucleolus. Its function is as follows. Involved in pre-rRNA processing and ribosome assembly. The protein is Nucleolin 1 of Oryza sativa subsp. japonica (Rice).